The sequence spans 952 residues: Glycine dehydrogenase (decarboxylating) (952 aa).

Residue Lys696 is modified to N6-(pyridoxal phosphate)lysine.

It belongs to the GcvP family. As to quaternary structure, the glycine cleavage system is composed of four proteins: P, T, L and H. It depends on pyridoxal 5'-phosphate as a cofactor.

The enzyme catalyses N(6)-[(R)-lipoyl]-L-lysyl-[glycine-cleavage complex H protein] + glycine + H(+) = N(6)-[(R)-S(8)-aminomethyldihydrolipoyl]-L-lysyl-[glycine-cleavage complex H protein] + CO2. Its function is as follows. The glycine cleavage system catalyzes the degradation of glycine. The P protein binds the alpha-amino group of glycine through its pyridoxal phosphate cofactor; CO(2) is released and the remaining methylamine moiety is then transferred to the lipoamide cofactor of the H protein. This chain is Glycine dehydrogenase (decarboxylating), found in Pelagibacter ubique (strain HTCC1062).